The sequence spans 678 residues: DNA ligase (678 aa).

Residues 32-36 (DSEYD), 81-82 (SL), and Glu-113 contribute to the NAD(+) site. Residue Lys-115 is the N6-AMP-lysine intermediate of the active site. NAD(+) contacts are provided by Arg-136, Glu-174, Lys-291, and Lys-315. Residues Cys-409, Cys-412, Cys-427, and Cys-433 each coordinate Zn(2+). Positions 596–678 (ASDNPFAGKT…MRLLGESSDA (83 aa)) constitute a BRCT domain.

The protein belongs to the NAD-dependent DNA ligase family. LigA subfamily. The cofactor is Mg(2+). Requires Mn(2+) as cofactor.

The catalysed reaction is NAD(+) + (deoxyribonucleotide)n-3'-hydroxyl + 5'-phospho-(deoxyribonucleotide)m = (deoxyribonucleotide)n+m + AMP + beta-nicotinamide D-nucleotide.. In terms of biological role, DNA ligase that catalyzes the formation of phosphodiester linkages between 5'-phosphoryl and 3'-hydroxyl groups in double-stranded DNA using NAD as a coenzyme and as the energy source for the reaction. It is essential for DNA replication and repair of damaged DNA. This Sodalis glossinidius (strain morsitans) protein is DNA ligase.